We begin with the raw amino-acid sequence, 732 residues long: Aldehyde oxidoreductase molybdenum-binding subunit PaoC (732 aa).

Residues 241-242 (GF), 468-470 (IGT), 511-512 (GA), 615-621 (RILNPKT), Gln-625, and 688-691 (KGVG) contribute to the Mo-molybdopterin cytosine dinucleotide site. Glu-692 (proton acceptor) is an active-site residue.

Belongs to the xanthine dehydrogenase family. In terms of assembly, heterotrimer composed of PaoA, PaoB and PaoC. The cofactor is Mo-molybdopterin cytosine dinucleotide.

The protein localises to the periplasm. It catalyses the reaction an aldehyde + A + H2O = a carboxylate + AH2 + H(+). The complex requires PaoD for activity. Its function is as follows. Oxidizes aldehydes to the corresponding carboxylic acids with a preference for aromatic aldehydes. It might play a role in the detoxification of aldehydes to avoid cell damage. This is Aldehyde oxidoreductase molybdenum-binding subunit PaoC from Escherichia coli (strain K12).